Consider the following 357-residue polypeptide: DNA replication and repair protein RecF (357 aa).

30-37 (GANGSGKT) contacts ATP.

This sequence belongs to the RecF family.

The protein resides in the cytoplasm. The RecF protein is involved in DNA metabolism; it is required for DNA replication and normal SOS inducibility. RecF binds preferentially to single-stranded, linear DNA. It also seems to bind ATP. This chain is DNA replication and repair protein RecF, found in Enterobacter sp. (strain 638).